Consider the following 185-residue polypeptide: Ribosome-recycling factor (185 aa).

A disordered region spans residues 143 to 163 (RKDGEAGEDEVARAEKDLDKS).

The protein belongs to the RRF family.

It localises to the cytoplasm. Its function is as follows. Responsible for the release of ribosomes from messenger RNA at the termination of protein biosynthesis. May increase the efficiency of translation by recycling ribosomes from one round of translation to another. The sequence is that of Ribosome-recycling factor from Mycobacterium marinum (strain ATCC BAA-535 / M).